Reading from the N-terminus, the 861-residue chain is MNPIDTDDLEKHTPMMRQYLTMKAEHHDMLLFYRMGDFYELFYDDAKRASELLGISLTARGKSGGDPIPMAGIPYHAVEGYLAKLVQIGQSVAICEQIGDPATSKGPVERKVVRIVTPGTLTDEALLQERQDNLLAAVYQGKVGFGYATLDVSSGRFVIAELETKESLEAELQRTNPVEILYSEDFDAMELLHHFKGKRRRPEWEFDYDTSIKLLLAQFGTKDLHGFGITDARLSLQAAGCLMQYVKDTQRTALPHINAITRFNQTDTIVLDAATRRNLELTQNLSGGRDNTLAAVLDNTATAMGSRMLQRWIHQPLRDHAQIFARQTAVNELLETTAHESLHEQLKALGDIERIMARLALRTARPRDFARLRQALNLLPQLQQSLAQLSAPHTVKLGQLLGEFPEEQQLLERAIVDNPPMLIRDGGVIREGYNAELDEWRGLSEGATDYLVQLEAREKERTGIATLKVGYNRVHGYYIEVSRLQSQQVPLNYQRRQTLKNMERYITPELKEYEEKVLSSQGKALALEKQLWDELFDLILPKLHELQAFARAAAELDVLSNFAERAETLGYTCPELSSEIGVKIEAGRHPVVERVSQTPFIANPVTLHNQRRMLIVTGPNMGGKSTYMRQVALITLMAHIGCFVSADRAIIGPIDRIFTRIGASDDLASGRSTFMVEMTETANILHNATAQSLVLMDEIGRGTSTYDGLSLAWSAAEYLAQQIGAMTLFATHYFELTQLPELMAGVYNVHLDAIEHEDTIAFMHAVQEGAASKSYGLQVASLAGVPARVIKAAKHKLHQLESRDHQVEGVNVNGTRAPIQTLLALPEPVENPAVSKLKAINPDNLTPKQALDLLYELKRLS.

An ATP-binding site is contributed by 618–625 (GPNMGGKS).

Belongs to the DNA mismatch repair MutS family.

Its function is as follows. This protein is involved in the repair of mismatches in DNA. It is possible that it carries out the mismatch recognition step. This protein has a weak ATPase activity. This is DNA mismatch repair protein MutS from Shewanella sp. (strain MR-7).